The sequence spans 556 residues: Formate--tetrahydrofolate ligase (556 aa).

Position 65-72 (65-72) interacts with ATP; sequence TPAGEGKS.

Belongs to the formate--tetrahydrofolate ligase family.

The enzyme catalyses (6S)-5,6,7,8-tetrahydrofolate + formate + ATP = (6R)-10-formyltetrahydrofolate + ADP + phosphate. Its pathway is one-carbon metabolism; tetrahydrofolate interconversion. This is Formate--tetrahydrofolate ligase from Clostridium perfringens (strain ATCC 13124 / DSM 756 / JCM 1290 / NCIMB 6125 / NCTC 8237 / Type A).